The following is a 425-amino-acid chain: MSEELSHGKDYTLESDSELRFEIEQKDAKVLVTLISGFAELFGTELVKKKKYEFGVGAKVAIFTYQGCVLHVSGKMDVCYISKETPMVQYLNCHAALEQFRTDAEDKDQRGPVAMVVGPMDVGKSTLCRILLNYAVRVGRRPLYADLDVGQGAIAISGNVATILIERPASVEDGFPKTAPLVYHFGHKSPGGNSVLYNSVVSKMAEVTLQSLNSNKRTKSSGIIINTCGWVKGSGYAHLLHAAQAYGACAIFVLDQERLYNELLRDVPQGVNVVLLPKSGGVVERSKELRHESRDLRMKEYFYGNPRAPFYPFSFEVKFQDLRLYKIGAPPLPDSCMPIGMKAEDNKTKVVAVTPTPALIHHILALSFAESVEDDVIGSNVAGFCCVTEVDMERQAVMVLSPQPRPLPPNSLLLWSELQFMDNHT.

Residues E18, K59, and 121-126 each bind ATP; that span reads DVGKST.

Belongs to the Clp1 family. Clp1 subfamily.

The protein localises to the nucleus. In terms of biological role, required for endonucleolytic cleavage during polyadenylation-dependent pre-mRNA 3'-end formation. In Drosophila ananassae (Fruit fly), this protein is Protein CLP1 homolog (cbc).